Consider the following 430-residue polypeptide: Asparagine--tRNA ligase (430 aa).

It belongs to the class-II aminoacyl-tRNA synthetase family.

The protein resides in the cytoplasm. The catalysed reaction is tRNA(Asn) + L-asparagine + ATP = L-asparaginyl-tRNA(Asn) + AMP + diphosphate + H(+). In Thermococcus gammatolerans (strain DSM 15229 / JCM 11827 / EJ3), this protein is Asparagine--tRNA ligase.